A 619-amino-acid polypeptide reads, in one-letter code: Secretogranin-2 (619 aa).

Positions 1 to 30 (MTESKAYRFGAVLLLIHLIFLVPGTEAASF) are cleaved as a signal peptide. Tyrosine 153 bears the Sulfotyrosine mark. Residues serine 176 and serine 270 each carry the phosphoserine modification. The tract at residues 247 to 307 (VGGEDWSPME…RKESKDQLSE (61 aa)) is disordered. Basic and acidic residues-rich tracts occupy residues 255-286 (MEEK…EMKR) and 295-307 (EGNR…QLSE). 4 positions are modified to phosphoserine: serine 434, serine 534, serine 557, and serine 558.

It belongs to the chromogranin/secretogranin protein family. Interacts with Secretogranin III/SCG3. In terms of tissue distribution, brain. Expression in the pituitary is restricted to the anterior lobe. Expression in the hypothalamus is observed in the neuronal cells and neurons of arcuate nucleus, supraoptic nucleus and median eminence (at protein level).

Its subcellular location is the secreted. Functionally, neuroendocrine protein of the granin family that regulates the biogenesis of secretory granules. The protein is Secretogranin-2 (Scg2) of Rattus norvegicus (Rat).